The sequence spans 558 residues: Probable rhamnogalacturonase B (558 aa).

Residues 1–21 (MLLDKLSVLSFLGLAPIFAAA) form the signal peptide. C42 and C68 form a disulfide bridge. A glycan (N-linked (GlcNAc...) asparagine) is linked at N145. D219 (proton donor) is an active-site residue. The cysteines at positions 221 and 238 are disulfide-linked. N-linked (GlcNAc...) asparagine glycosylation is found at N239 and N254. Residue H294 is part of the active site. The N-linked (GlcNAc...) asparagine glycan is linked to N321. 2 disulfide bridges follow: C344–C350 and C372–C381. Positions 503 to 526 (VGAQEGSTTSAPSFAAPSGAGNSP) are enriched in low complexity. The interval 503–558 (VGAQEGSTTSAPSFAAPSGAGNSPQGPTGASGFGEKGQQGEQGEQGEQGEQGVCYV) is disordered.

This sequence belongs to the glycosyl hydrolase 28 family.

The protein resides in the secreted. The enzyme catalyses Endohydrolysis of alpha-D-GalA-(1-&gt;2)-alpha-L-Rha glycosidic bond in the rhamnogalacturonan I backbone with initial inversion of anomeric configuration releasing oligosaccharides with beta-D-GalA at the reducing end.. Functionally, pectinolytic enzymes consist of four classes of enzymes: pectine lyase, polygalacturonase, pectin methylesterase and rhamnogalacturonase. Hydrolyzes alpha-D-galacturonopyranosyl-(1,2)-alpha-L-rhamnopyranosyl linkages in the backbone of the hairy regions of pectins. This chain is Probable rhamnogalacturonase B (rhgB), found in Aspergillus niger (strain ATCC MYA-4892 / CBS 513.88 / FGSC A1513).